The sequence spans 344 residues: AI-2 transport protein TqsA (344 aa).

Topologically, residues 1 to 4 are cytoplasmic; sequence MAKP. A helical transmembrane segment spans residues 5 to 25; sequence IITLNGLKIVIMLGMLVIILC. The Periplasmic portion of the chain corresponds to 26 to 30; sequence GIRFA. A helical transmembrane segment spans residues 31-51; that stretch reads AEIIVPFILALFIAVILNPLV. At 52-61 the chain is on the cytoplasmic side; the sequence is QHMVRWRVPR. A helical transmembrane segment spans residues 62–82; the sequence is VLAVSILMTIIVMAMVLLLAY. Residues 83–149 are Periplasmic-facing; the sequence is LGSALNELTR…LLTQLSNAMS (67 aa). A helical transmembrane segment spans residues 150 to 170; the sequence is SIFLLLLTVLFMLLEVPQLPG. Over 171–196 the chain is Cytoplasmic; the sequence is KFQQMMARPVEGMAAIQRAIDSVSHY. Residues 197 to 217 form a helical membrane-spanning segment; it reads LVLKTAISIITGLVAWAMLAA. The Periplasmic portion of the chain corresponds to 218 to 221; the sequence is LDVR. A helical membrane pass occupies residues 222–242; it reads FAFVWGLLAFALNYIPNIGSV. Residues 243 to 257 are Cytoplasmic-facing; that stretch reads LAAIPPIAQVLVFNG. Residues 258-278 traverse the membrane as a helical segment; the sequence is FYEALLVLAGYLLINLVFGNI. Residues 279-292 lie on the Periplasmic side of the membrane; the sequence is LEPRIMGRGLGLST. The chain crosses the membrane as a helical span at residues 293 to 313; sequence LVVFLSLIFWGWLLGPVGMLL. At 314-344 the chain is on the cytoplasmic side; it reads SVPLTIIVKIALEQTAGGQSIAVLLSDLNKE.

This sequence belongs to the autoinducer-2 exporter (AI-2E) (TC 2.A.86) family.

The protein localises to the cell inner membrane. The enzyme catalyses (2R,4S)-2-methyltetrahydrofuran-2,3,3,4-tetrol(in) = (2R,4S)-2-methyltetrahydrofuran-2,3,3,4-tetrol(out). In terms of biological role, involved in the transport of the quorum-sensing signal autoinducer 2 (AI-2). Controls the transport of AI-2 either by enhancing its secretion or inhibiting its uptake and consequently represses biofilm formation and motility and affects the global gene expression in biofilms. This Escherichia coli (strain K12) protein is AI-2 transport protein TqsA.